We begin with the raw amino-acid sequence, 403 residues long: MTSYSYRQTSAMSSFGGTGGGSVRIGSGGVFRAPSIHGGSGGRGVSVSSTRFVTSSSGSYGGVRGGSFSGTLAVSDGLLSGNEKITMQNLNDRLASYLDKVRALEQANGELEVKIRDWYQKQGPGPSRDYNHYFKTIEDLRDKILGATIDNSKIVLQIDNARLAADDFRTKFETEHALRLSVEADINGLRRVLDELTLARTDLEMQIESLKEELAYLKKNHEEEITALRSQVGGQVSVEVDSTPGVDLAKILSEMRSQYEIMAEKNRKDAEATYLARIEELNTQVAVHSEQIQISKTEVTDLRRTLQGLEIELQSQLSMKAALEGTLAETEARYGVQLSQIQSVISGFEAQLSDVRADIERQNQEYKQLMDIKSRLEQEIATYRSLLEGQEAHYNNLPTPKAI.

Residues 1–82 form a head region; it reads MTSYSYRQTS…AVSDGLLSGN (82 aa). At arginine 7 the chain carries Omega-N-methylarginine. Residues serine 14 and serine 22 each carry the phosphoserine modification. Asymmetric dimethylarginine; alternate is present on arginine 24. Residue arginine 24 is modified to Omega-N-methylarginine; alternate. Serine 27 carries the phosphoserine modification. At arginine 32 the chain carries Omega-N-methylarginine. Serine 35 and serine 40 each carry phosphoserine. Residues arginine 43 and arginine 51 each carry the omega-N-methylarginine modification. The residue at position 57 (serine 57) is a Phosphoserine. Residue arginine 64 is modified to Omega-N-methylarginine. Residues serine 67 and serine 75 each carry the phosphoserine modification. Residues 83 to 118 are coil 1A; the sequence is EKITMQNLNDRLASYLDKVRALEQANGELEVKIRDW. The region spanning 83–394 is the IF rod domain; that stretch reads EKITMQNLND…SLLEGQEAHY (312 aa). A linker 1 region spans residues 119–136; sequence YQKQGPGPSRDYNHYFKT. The coil 1B stretch occupies residues 137–228; it reads IEDLRDKILG…KNHEEEITAL (92 aa). The tract at residues 229–251 is linker 12; that stretch reads RSQVGGQVSVEVDSTPGVDLAKI. The interval 247–393 is necessary for interaction with PNN; the sequence is DLAKILSEMR…RSLLEGQEAH (147 aa). The segment at 252–390 is coil 2; that stretch reads LSEMRSQYEI…ATYRSLLEGQ (139 aa). A Phosphothreonine modification is found at threonine 326. The interval 391–403 is rod-like helical tail; sequence EAHYNNLPTPKAI. The residue at position 394 (tyrosine 394) is a Phosphotyrosine.

It belongs to the intermediate filament family. As to quaternary structure, heterotetramer of two type I and two type II keratins. Interacts with PNN and the actin-binding domain of DMD.

Its function is as follows. Involved in the organization of myofibers. Together with KRT8, helps to link the contractile apparatus to dystrophin at the costameres of striated muscle. The protein is Keratin, type I cytoskeletal 19 (Krt19) of Mus musculus (Mouse).